Reading from the N-terminus, the 269-residue chain is MAPKAPKWRELADRFAEQIRTGDYGPGEQLPQIRDLVEAGEGSKETVHRAYKALETEGLVAMSRGHGTVVRRKAPLKRLGIGRYDKAKWRDGDEVAFIADRVASGRSYRRNEQTQTVSRVKASAAVATALGLPEGADVYARARLVKEGTQPTHTLTSYYRPEHVEGTRIVDPTPGPAGRGGGFRVLYDAGYEIDHMTEEIFARVPSAEEAQLLQLAPGEWVVELHRTTRTVDGTVVEFAIGVHAGTRFAWSYDFKVPDSAMTEAEDESK.

The HTH gntR-type domain occupies 5–73 (APKWRELADR…RGHGTVVRRK (69 aa)). The segment at residues 33–52 (IRDLVEAGEGSKETVHRAYK) is a DNA-binding region (H-T-H motif).

Its function is as follows. The imp locus inhibits the extrachromosomal maintenance of the Streptomyces plasmid SLP1. This is an uncharacterized protein from Streptomyces coelicolor (strain ATCC BAA-471 / A3(2) / M145).